An 869-amino-acid polypeptide reads, in one-letter code: Speckle targeted PIP5K1A-regulated poly(A) polymerase (869 aa).

The Matrin-type zinc-finger motif lies at 16 to 46; that stretch reads FRCCLCHVTTANRPSLDAHLGGRKHRHLVEL. One can recognise an RRM domain in the interval 56–128; the sequence is RSVFVSGFPR…HRLRVRPREQ (73 aa). Residues 111–147 are disordered; the sequence is QPQHTLGGHRLRVRPREQKEFQSPASKSPKGAAPDSH. An ATP-binding site is contributed by serine 205. Aspartate 216 and aspartate 218 together coordinate Mg(2+). Aspartate 216 and aspartate 218 together coordinate UTP. The segment at 252–315 is disordered; that stretch reads QALACTPASP…PASPLQEDRG (64 aa). Positions 259 to 269 are enriched in pro residues; it reads ASPPDSQPPSP. The span at 279–290 shows a compositional bias: polar residues; the sequence is TPSSSLAPQTPD. Asparagine 391 contacts ATP. UTP contacts are provided by asparagine 391, arginine 413, tyrosine 431, and histidine 548. One can recognise a PAP-associated domain in the interval 490-548; it reads LSSLLAQFFSCVSCWDLRGSLLSLREGQALPVAGDLPSNRWEGLRLGPMNLQDPFDLSH. The interval 597 to 869 is KA1; binds the bulging loops of U6 snRNA but is dispensable for terminal uridylyltransferase activity; it reads SSPSSLLSAT…VFLPQALRNL (273 aa). 2 stretches are compositionally biased toward basic and acidic residues: residues 637 to 648 and 660 to 686; these read GTKRLRSDRGGP and LKLD…HSED. Disordered stretches follow at residues 637 to 686 and 720 to 755; these read GTKR…HSED and LATG…TGRG. Residues serine 684 and serine 748 each carry the phosphoserine modification.

This sequence belongs to the DNA polymerase type-B-like family. Associates with the cleavage and polyadenylation specificity factor (CPSF) complex. Interacts with CPSF1 and CPSF3; the interaction is direct. Interacts with PIP5K1A. The cofactor is Mg(2+). Requires Mn(2+) as cofactor. In terms of processing, phosphorylated by CK1 in the proline-rich (Pro-rich) region.

It localises to the nucleus. The protein localises to the nucleolus. The protein resides in the nucleus speckle. The catalysed reaction is RNA(n) + UTP = RNA(n)-3'-uridine ribonucleotide + diphosphate. It catalyses the reaction RNA(n) + ATP = RNA(n)-3'-adenine ribonucleotide + diphosphate. With respect to regulation, adenylyltransferase activity is specifically phosphatidylinositol 4,5-bisphosphate (PtdIns(4,5)P2). Poly(A) polymerase that creates the 3'-poly(A) tail of specific pre-mRNAs. Localizes to nuclear speckles together with PIP5K1A and mediates polyadenylation of a select set of mRNAs, such as HMOX1. In addition to polyadenylation, it is also required for the 3'-end cleavage of pre-mRNAs: binds to the 3'UTR of targeted pre-mRNAs and promotes the recruitment and assembly of the CPSF complex on the 3'UTR of pre-mRNAs. In addition to adenylyltransferase activity, also has uridylyltransferase activity. However, the ATP ratio is higher than UTP in cells, suggesting that it functions primarily as a poly(A) polymerase. Acts as a specific terminal uridylyltransferase for U6 snRNA in vitro: responsible for a controlled elongation reaction that results in the restoration of the four 3'-terminal UMP-residues found in newly transcribed U6 snRNA. Not involved in replication-dependent histone mRNA degradation. In Ailuropoda melanoleuca (Giant panda), this protein is Speckle targeted PIP5K1A-regulated poly(A) polymerase (TUT1).